A 146-amino-acid polypeptide reads, in one-letter code: Deoxyuridine 5'-triphosphate nucleotidohydrolase (146 aa).

Substrate contacts are provided by residues 66-68 (RSG), Asn79, 83-85 (TID), and Lys93.

Belongs to the dUTPase family. Requires Mg(2+) as cofactor.

It catalyses the reaction dUTP + H2O = dUMP + diphosphate + H(+). It functions in the pathway pyrimidine metabolism; dUMP biosynthesis; dUMP from dCTP (dUTP route): step 2/2. This enzyme is involved in nucleotide metabolism: it produces dUMP, the immediate precursor of thymidine nucleotides and it decreases the intracellular concentration of dUTP so that uracil cannot be incorporated into DNA. The protein is Deoxyuridine 5'-triphosphate nucleotidohydrolase of Zymomonas mobilis subsp. mobilis (strain ATCC 31821 / ZM4 / CP4).